Reading from the N-terminus, the 348-residue chain is Malyl-CoA/beta-methylmalyl-CoA/citramalyl-CoA lyase (348 aa).

Substrate contacts are provided by residues 32 to 33, Lys40, and Arg92; that span reads HF. Mg(2+) is bound by residues Glu157 and Asp184. Residues 183-184 and Leu274 contribute to the substrate site; that span reads AD.

It belongs to the HpcH/HpaI aldolase family. Homohexamer. Dimer of trimers. Requires Mg(2+) as cofactor. It depends on Mn(2+) as a cofactor.

The enzyme catalyses (S)-malyl-CoA = glyoxylate + acetyl-CoA. It carries out the reaction (2R,3S)-beta-methylmalyl-CoA = propanoyl-CoA + glyoxylate. It catalyses the reaction (3S)-citramalyl-CoA = pyruvate + acetyl-CoA. With respect to regulation, inhibited by oxalate. In terms of biological role, involved in the 3-hydroxypropionate cycle used for autotrophic carbon dioxide fixation, and in the glyoxylate assimilation cycle used to regenerate acetyl-CoA and produce pyruvate as universal precursor for biosynthesis. As a part of the 3-hydroxypropionate cycle, it catalyzes the cleavage of (S)-malyl-CoA to yield acetyl-CoA and glyoxylate. As part of the glyoxylate assimilation cycle, it catalyzes the condensation of glyoxylate with propionyl-CoA to yield (2R,3S)-beta-methylmalyl-CoA, and catalyzes the cleavage of (S)-citramalyl-CoA to yield acetyl-CoA and pyruvate. The chain is Malyl-CoA/beta-methylmalyl-CoA/citramalyl-CoA lyase (mcl) from Chloroflexus aurantiacus.